The following is an 88-amino-acid chain: Sec-independent protein translocase protein TatA (88 aa).

A helical transmembrane segment spans residues 1–21 (MGGASIWHWIVVGVIVMLLFG). The interval 62 to 88 (TEPVRTLPPHPTEPAPATHATVDRKVV) is disordered.

This sequence belongs to the TatA/E family. As to quaternary structure, the Tat system comprises two distinct complexes: a TatABC complex, containing multiple copies of TatA, TatB and TatC subunits, and a separate TatA complex, containing only TatA subunits. Substrates initially bind to the TatABC complex, which probably triggers association of the separate TatA complex to form the active translocon.

It localises to the cell inner membrane. Functionally, part of the twin-arginine translocation (Tat) system that transports large folded proteins containing a characteristic twin-arginine motif in their signal peptide across membranes. TatA could form the protein-conducting channel of the Tat system. This chain is Sec-independent protein translocase protein TatA, found in Methylobacterium sp. (strain 4-46).